A 108-amino-acid chain; its full sequence is UPF0145 protein Npun_F4817 (108 aa).

The protein belongs to the UPF0145 family.

The sequence is that of UPF0145 protein Npun_F4817 from Nostoc punctiforme (strain ATCC 29133 / PCC 73102).